The sequence spans 392 residues: MRYITAGESHGPQLTAIIEGLPAGLEISPEMLDLQLARRQQGYGRGDRMKIERDRADILSGVRWGKTLGSPVTLVVKNRDWENWLEKMSPLAEHEGQAEAVTRPRPGHADLCGAMKYGHRDVRNILERSSARETAVRVAVGAVARGLLHALDIRIGGVVVEVGGVAAKPSAEPYPQQWAQAAASEMFCCDPAAELDMKRLIDHTKSIGDTLGGVVEVQVLGLPPGLGSHVQWDRKLDARLAMALMSIQAIKGVEIGLGFEAARRPGSKVHDEITWNPARLQQGELTPYQRPSNHAGGLEGGMTNGEPLVVRAAMKPIPTLYTPLQSVDIATHEPYEASVERSDTCAVPAALVVAEAVVAIELAQALLEKFGGDSLDEIRRNRDNYLAGLRDF.

NADP(+) is bound by residues R39 and R45. FMN is bound by residues 128–130 (RSS), 248–249 (QA), G300, 315–319 (KPIPT), and R341.

The protein belongs to the chorismate synthase family. As to quaternary structure, homotetramer. It depends on FMNH2 as a cofactor.

It carries out the reaction 5-O-(1-carboxyvinyl)-3-phosphoshikimate = chorismate + phosphate. The protein operates within metabolic intermediate biosynthesis; chorismate biosynthesis; chorismate from D-erythrose 4-phosphate and phosphoenolpyruvate: step 7/7. Functionally, catalyzes the anti-1,4-elimination of the C-3 phosphate and the C-6 proR hydrogen from 5-enolpyruvylshikimate-3-phosphate (EPSP) to yield chorismate, which is the branch point compound that serves as the starting substrate for the three terminal pathways of aromatic amino acid biosynthesis. This reaction introduces a second double bond into the aromatic ring system. This is Chorismate synthase from Trichlorobacter lovleyi (strain ATCC BAA-1151 / DSM 17278 / SZ) (Geobacter lovleyi).